Consider the following 131-residue polypeptide: uncharacterized protein (131 aa).

The tract at residues 16-71 (MSEQERDEVLEDDDDDEDNKSSQQERDEFVEDDDNNSIQSSPSCAQPLLTQYHDDG) is disordered. Positions 20–33 (ERDEVLEDDDDDED) are enriched in acidic residues.

This is an uncharacterized protein from Dictyostelium discoideum (Social amoeba).